A 137-amino-acid polypeptide reads, in one-letter code: Nucleoside diphosphate kinase (137 aa).

K9, F57, R85, T91, R102, and N112 together coordinate ATP. Residue H115 is the Pros-phosphohistidine intermediate of the active site.

Belongs to the NDK family. In terms of assembly, homotetramer. Mg(2+) serves as cofactor.

The protein resides in the cytoplasm. It catalyses the reaction a 2'-deoxyribonucleoside 5'-diphosphate + ATP = a 2'-deoxyribonucleoside 5'-triphosphate + ADP. The catalysed reaction is a ribonucleoside 5'-diphosphate + ATP = a ribonucleoside 5'-triphosphate + ADP. Its function is as follows. Major role in the synthesis of nucleoside triphosphates other than ATP. The ATP gamma phosphate is transferred to the NDP beta phosphate via a ping-pong mechanism, using a phosphorylated active-site intermediate. In Thermus thermophilus (strain ATCC 27634 / DSM 579 / HB8), this protein is Nucleoside diphosphate kinase.